A 171-amino-acid chain; its full sequence is Protein GrpE (171 aa).

Residues 1–20 are disordered; the sequence is MNEEKEESPSTEAEGAGAEV.

It belongs to the GrpE family. In terms of assembly, homodimer.

Its subcellular location is the cytoplasm. Its function is as follows. Participates actively in the response to hyperosmotic and heat shock by preventing the aggregation of stress-denatured proteins, in association with DnaK and GrpE. It is the nucleotide exchange factor for DnaK and may function as a thermosensor. Unfolded proteins bind initially to DnaJ; upon interaction with the DnaJ-bound protein, DnaK hydrolyzes its bound ATP, resulting in the formation of a stable complex. GrpE releases ADP from DnaK; ATP binding to DnaK triggers the release of the substrate protein, thus completing the reaction cycle. Several rounds of ATP-dependent interactions between DnaJ, DnaK and GrpE are required for fully efficient folding. This is Protein GrpE from Acidithiobacillus ferrooxidans (strain ATCC 23270 / DSM 14882 / CIP 104768 / NCIMB 8455) (Ferrobacillus ferrooxidans (strain ATCC 23270)).